The sequence spans 305 residues: Methionyl-tRNA formyltransferase (305 aa).

108-111 (SLLP) contacts (6S)-5,6,7,8-tetrahydrofolate.

Belongs to the Fmt family.

It carries out the reaction L-methionyl-tRNA(fMet) + (6R)-10-formyltetrahydrofolate = N-formyl-L-methionyl-tRNA(fMet) + (6S)-5,6,7,8-tetrahydrofolate + H(+). In terms of biological role, attaches a formyl group to the free amino group of methionyl-tRNA(fMet). The formyl group appears to play a dual role in the initiator identity of N-formylmethionyl-tRNA by promoting its recognition by IF2 and preventing the misappropriation of this tRNA by the elongation apparatus. The protein is Methionyl-tRNA formyltransferase of Clavibacter michiganensis subsp. michiganensis (strain NCPPB 382).